Here is a 436-residue protein sequence, read N- to C-terminus: KICSTOR complex protein kaptin (436 aa).

Methionine 1 is modified (N-acetylmethionine).

As to quaternary structure, part of the KICSTOR complex composed of KPTN, ITFG2, KICS2 and SZT2. SZT2 probably serves as a link between the other three proteins in the KICSTOR complex and mediates the direct interaction with the GATOR1 complex. May associate with F-actin filaments.

It is found in the lysosome membrane. It localises to the cell projection. The protein localises to the lamellipodium. The protein resides in the stereocilium. As part of the KICSTOR complex functions in the amino acid-sensing branch of the TORC1 signaling pathway. Recruits, in an amino acid-independent manner, the GATOR1 complex to the lysosomal membranes and allows its interaction with GATOR2 and the RAG GTPases. Functions upstream of the RAG GTPases and is required to negatively regulate mTORC1 signaling in absence of amino acids. In absence of the KICSTOR complex mTORC1 is constitutively localized to the lysosome and activated. The KICSTOR complex is also probably involved in the regulation of mTORC1 by glucose. This is KICSTOR complex protein kaptin from Homo sapiens (Human).